The sequence spans 1043 residues: Unconventional myosin-Ia (1043 aa).

Positions 8 to 694 (VGVEDLVLLE…TLFYLEEQRR (687 aa)) constitute a Myosin motor domain. Residue 101–108 (GESGAGKT) coordinates ATP. An actin-binding region spans residues 571 to 593 (VTTLMKNLYSKNPNYIRCIKPNE). IQ domains lie at 697 to 719 (LQQLATLIQKTYRGWRCRTHYQL), 720 to 742 (MRKSQIVISSWFRGNMQKKHYRK), and 743 to 772 (MKASALLIQAFVRGWKARKNYRKYFRSGAA). The region spanning 858–1042 (KASYPQSVPI…KGSRCLEVTV (185 aa)) is the TH1 domain.

This sequence belongs to the TRAFAC class myosin-kinesin ATPase superfamily. Myosin family. In terms of processing, phosphorylated by ALPK1.

Functionally, involved in directing the movement of organelles along actin filaments. The chain is Unconventional myosin-Ia (MYO1A) from Bos taurus (Bovine).